The chain runs to 144 residues: 3-hydroxyacyl-[acyl-carrier-protein] dehydratase FabZ (144 aa).

H51 is a catalytic residue.

Belongs to the thioester dehydratase family. FabZ subfamily.

It localises to the cytoplasm. It carries out the reaction a (3R)-hydroxyacyl-[ACP] = a (2E)-enoyl-[ACP] + H2O. Involved in unsaturated fatty acids biosynthesis. Catalyzes the dehydration of short chain beta-hydroxyacyl-ACPs and long chain saturated and unsaturated beta-hydroxyacyl-ACPs. In Clostridium botulinum (strain Loch Maree / Type A3), this protein is 3-hydroxyacyl-[acyl-carrier-protein] dehydratase FabZ.